We begin with the raw amino-acid sequence, 317 residues long: Melanocyte-stimulating hormone receptor (317 aa).

Residues 1 to 37 (MPAQGSQRGLLGAVNFTPTATPHLRPAANQTGPQCLE) lie on the Extracellular side of the membrane. Asn29 is a glycosylation site (N-linked (GlcNAc...) asparagine). Residues 38–63 (VSVPDGLFLCLGLVSLVENTLVVAAI) form a helical membrane-spanning segment. The Cytoplasmic segment spans residues 64–72 (AKNRNLHSP). Residues 73–93 (MYCFICCLALSDLLVSVSNLL) traverse the membrane as a helical segment. Over 94-118 (ETAVLLLLEVGALAAQATVVQQLGN) the chain is Extracellular. A helical membrane pass occupies residues 119–140 (VIDVLICSSMVSSLCSLGAIAM). Residues 141 to 163 (DRYISIFYALRYHSIVTLARARR) are Cytoplasmic-facing. Residues 164–183 (AIAAVWAASILSSTLFITYY) traverse the membrane as a helical segment. At 184–191 (DRTAALLC) the chain is on the extracellular side. A helical membrane pass occupies residues 192–211 (LVVFFLAMLVLMALLYVHML). Residues 212-240 (IQACQHAQAIARLHKRQHPVQQGWGLKGA) are Cytoplasmic-facing. A helical transmembrane segment spans residues 241-266 (ATLTILLGVFFLCWGPFFLHLTLIAV). Over 267-279 (CPQHPTCSCIFKN) the chain is Extracellular. The chain crosses the membrane as a helical span at residues 280–300 (FRLFLALIICNTIVDPLIYAF). At 301-317 (RSQELRRTLKEVLLFSW) the chain is on the cytoplasmic side.

It belongs to the G-protein coupled receptor 1 family. As to quaternary structure, interacts with MGRN1, but does not undergo MGRN1-mediated ubiquitination; this interaction competes with GNAS-binding and thus inhibits agonist-induced cAMP production. Interacts with OPN3; the interaction results in a decrease in MC1R-mediated cAMP signaling and ultimately a decrease in melanin production in melanocytes.

The protein localises to the cell membrane. Receptor for MSH (alpha, beta and gamma) and ACTH. The activity of this receptor is mediated by G proteins which activate adenylate cyclase. Mediates melanogenesis, the production of eumelanin (black/brown) and phaeomelanin (red/yellow), via regulation of cAMP signaling in melanocytes. The sequence is that of Melanocyte-stimulating hormone receptor (MC1R) from Eulemur fulvus fulvus (Brown lemur).